The following is an 848-amino-acid chain: Protein NETWORKED 2C (848 aa).

In terms of domain architecture, NAB spans 10 to 90 (YSWWWASHVR…ERYDHISKEL (81 aa)). The tract at residues 108–141 (FAMNEDDDDDAPVSPRHHKNKTSNKNVPKVPDLP) is disordered. Coiled-coil stretches lie at residues 172–204 (LSKT…SYEN), 241–278 (EAQI…SRKQ), 305–454 (SEKE…KATN), and 752–797 (AKFE…SEEF).

This sequence belongs to the NET family.

In terms of biological role, plant-specific actin binding protein. May be part of a membrane-cytoskeletal adapter complex. This chain is Protein NETWORKED 2C, found in Arabidopsis thaliana (Mouse-ear cress).